The following is a 370-amino-acid chain: Dual-specificity RNA methyltransferase RlmN (370 aa).

Catalysis depends on Glu93, which acts as the Proton acceptor. The Radical SAM core domain maps to 99 to 337 (EEGRGTLCVS…VTTVRKTRGD (239 aa)). Cys106 and Cys343 form a disulfide bridge. Positions 113, 117, and 120 each coordinate [4Fe-4S] cluster. S-adenosyl-L-methionine contacts are provided by residues 167 to 168 (GE), Ser199, 221 to 223 (SLH), and Asn300. The S-methylcysteine intermediate role is filled by Cys343.

It belongs to the radical SAM superfamily. RlmN family. The cofactor is [4Fe-4S] cluster.

The protein resides in the cytoplasm. It catalyses the reaction adenosine(2503) in 23S rRNA + 2 reduced [2Fe-2S]-[ferredoxin] + 2 S-adenosyl-L-methionine = 2-methyladenosine(2503) in 23S rRNA + 5'-deoxyadenosine + L-methionine + 2 oxidized [2Fe-2S]-[ferredoxin] + S-adenosyl-L-homocysteine. It carries out the reaction adenosine(37) in tRNA + 2 reduced [2Fe-2S]-[ferredoxin] + 2 S-adenosyl-L-methionine = 2-methyladenosine(37) in tRNA + 5'-deoxyadenosine + L-methionine + 2 oxidized [2Fe-2S]-[ferredoxin] + S-adenosyl-L-homocysteine. Functionally, specifically methylates position 2 of adenine 2503 in 23S rRNA and position 2 of adenine 37 in tRNAs. m2A2503 modification seems to play a crucial role in the proofreading step occurring at the peptidyl transferase center and thus would serve to optimize ribosomal fidelity. The sequence is that of Dual-specificity RNA methyltransferase RlmN from Francisella tularensis subsp. mediasiatica (strain FSC147).